Consider the following 176-residue polypeptide: Endothelin-2 (176 aa).

The signal sequence occupies residues 1–22; that stretch reads MVSPAWCSIALALLLALHEGKG. Positions 23–44 are excised as a propeptide; sequence QAAATMEQPASAPKGRGPHLRF. 2 disulfide bridges follow: cysteine 47-cysteine 61 and cysteine 49-cysteine 57. Positions 68-176 are excised as a propeptide; the sequence is VNTAGQTAPY…IPAHSRRRKR (109 aa). The endothelin-like stretch occupies residues 94–109; it reads CECSSAGDSACATFCH.

This sequence belongs to the endothelin/sarafotoxin family.

The protein resides in the secreted. Vasoconstrictor. In Rattus norvegicus (Rat), this protein is Endothelin-2 (Edn2).